The chain runs to 499 residues: DAZ protein 1 (499 aa).

Residues 1 to 29 form a disordered region; that stretch reads MMSPPLRYQKDQQNQQHQQNQSQQAAHQM. Low complexity predominate over residues 12-28; that stretch reads QQNQQHQQNQSQQAAHQ. The region spanning 66 to 144 is the RRM domain; it reads PNRIFVGGFP…SRKLNLGPAI (79 aa). A compositionally biased stretch (low complexity) spans 195–224; that stretch reads FVYPPLRSQDQSRQQSEQQTTPQNSPTNLQ. Disordered regions lie at residues 195–304 and 406–499; these read FVYP…NNGG and YPGN…TKNN. Residues 214-236 form the DAZ domain; that stretch reads TTPQNSPTNLQHQQSPQVFFGGD. The segment covering 251–262 has biased composition (basic and acidic residues); sequence EKSEVSPEKHES. Residues 263-279 show a composition bias toward polar residues; the sequence is VSPQPLLPNQNVLNTQY. Low complexity predominate over residues 280–304; it reads SQGQQQWNSNVQQQQQQQMDSNNGG. The span at 406-425 shows a compositional bias: polar residues; the sequence is YPGNFSQQHTMGNNENTFSL. Positions 438–447 are enriched in basic and acidic residues; it reads KPSECQDKKT. The segment covering 480–499 has biased composition (low complexity); the sequence is LSPLSASLQSLAISSPTKNN.

This sequence belongs to the RRM DAZ family. Germline specific. More strongly expressed during oogenesis than during spermatogenesis. During the larval stages, it is more abundant at the distal region than the proximal region of the gonad. In young adult hermaphrodites, it is expressed at a very low level in the distal mitotic region of the gonad, and begins to accumulate in the meiotic transition zone. Highly expressed in the proximal pachytene region. Not expressed in mature oocytes. Not expressed in the spermatheca. Weakly or not expressed in the germline of adult males.

RNA-binding protein that plays a central role in oogenesis, but not for spermatogenesis. Required for meiotic entry and germline differentiation, at the pachytene stage of meiosis I of female germline regardless of the sex of the soma. May act by regulating translation of specific mRNAs, possibly by binding to their 3'-UTR. This chain is DAZ protein 1 (daz-1), found in Caenorhabditis elegans.